A 221-amino-acid polypeptide reads, in one-letter code: Nuclear phosphoprotein UL3 homolog (221 aa).

This sequence belongs to the alphaherpesvirinae HHV-1 UL3 family. Phosphorylated.

It is found in the host nucleus. This Varicella-zoster virus (strain Dumas) (HHV-3) protein is Nuclear phosphoprotein UL3 homolog.